The primary structure comprises 1083 residues: FACT complex subunit spt16 (1083 aa).

S437 carries the post-translational modification Phosphoserine. Residues 466-504 adopt a coiled-coil conformation; sequence LESKLRNEINTEEKRKEHQRELAQQLNERAKDRLARQGN. A disordered region spans residues 923 to 1083; the sequence is FEQGGWTFLD…NGHKSKKSRH (161 aa). Positions 935 to 987 are enriched in acidic residues; sequence SGSEGENETAESEEDEAYNPTDAESDEESDEDSEYSEASEDSEESDEDLGSDE. Basic and acidic residues predominate over residues 988 to 1023; sequence ESGKDWSDLEREAAEEDRNHDYAADDKPRNGKFDSK. Residues 1024-1033 show a composition bias toward basic residues; that stretch reads KHGKSSKHSP. The span at 1058 to 1076 shows a compositional bias: basic and acidic residues; it reads SSKDKDRKRSRDDSRDNGH.

It belongs to the peptidase M24 family. SPT16 subfamily. Component of the FACT complex, a stable heterodimer of dre4/spt16 and Ssrp. Interacts with TRL/GAGA.

The protein localises to the nucleus. It is found in the chromosome. Functionally, component of the FACT complex, a general chromatin factor that acts to reorganize nucleosomes. The FACT complex is involved in multiple processes that require DNA as a template such as mRNA elongation, DNA replication and DNA repair. During transcription elongation the FACT complex acts as a histone chaperone that both destabilizes and restores nucleosomal structure. It facilitates the passage of RNA polymerase II and transcription by promoting the dissociation of one histone H2A-H2B dimer from the nucleosome, then subsequently promotes the reestablishment of the nucleosome following the passage of RNA polymerase II. The FACT complex is required for expression of Hox genes. This Drosophila melanogaster (Fruit fly) protein is FACT complex subunit spt16 (dre4).